A 664-amino-acid polypeptide reads, in one-letter code: DNA ligase (664 aa).

Residues 32–36 (DKDYD) and 80–81 (SL) contribute to the NAD(+) site. The active-site N6-AMP-lysine intermediate is K122. NAD(+) is bound by residues R144, E178, and K314. Zn(2+) contacts are provided by C407, C410, C423, and C429. One can recognise a BRCT domain in the interval 587-664 (IKENIFNGKT…SEEDFKNMIG (78 aa)).

The protein belongs to the NAD-dependent DNA ligase family. LigA subfamily. Mg(2+) is required as a cofactor. Requires Mn(2+) as cofactor.

It carries out the reaction NAD(+) + (deoxyribonucleotide)n-3'-hydroxyl + 5'-phospho-(deoxyribonucleotide)m = (deoxyribonucleotide)n+m + AMP + beta-nicotinamide D-nucleotide.. In terms of biological role, DNA ligase that catalyzes the formation of phosphodiester linkages between 5'-phosphoryl and 3'-hydroxyl groups in double-stranded DNA using NAD as a coenzyme and as the energy source for the reaction. It is essential for DNA replication and repair of damaged DNA. The chain is DNA ligase from Clostridium novyi (strain NT).